The chain runs to 1129 residues: DNA-directed RNA polymerase I subunit RPA2 (1129 aa).

The C4-type zinc finger occupies 1061–1093; it reads CHKCGSILAPLQRIVKRNETGGLSSQPDTCRLC.

Belongs to the RNA polymerase beta chain family. As to quaternary structure, component of the RNA polymerase I (Pol I) complex consisting of at least 13 subunits.

It localises to the nucleus. The protein localises to the nucleolus. It carries out the reaction RNA(n) + a ribonucleoside 5'-triphosphate = RNA(n+1) + diphosphate. Functionally, DNA-dependent RNA polymerase catalyzes the transcription of DNA into RNA using the four ribonucleoside triphosphates as substrates. Second largest core component of RNA polymerase I which synthesizes ribosomal RNA precursors. Proposed to contribute to the polymerase catalytic activity and forms the polymerase active center together with the largest subunit. Pol I is composed of mobile elements and RPA2 is part of the core element with the central large cleft and probably a clamp element that moves to open and close the cleft. The chain is DNA-directed RNA polymerase I subunit RPA2 from Drosophila melanogaster (Fruit fly).